Reading from the N-terminus, the 290-residue chain is Nucleotide-binding protein LAR_0375 (290 aa).

13–20 (GMSGAGKT) serves as a coordination point for ATP. 63-66 (DMRS) provides a ligand contact to GTP.

Belongs to the RapZ-like family.

In terms of biological role, displays ATPase and GTPase activities. This is Nucleotide-binding protein LAR_0375 from Limosilactobacillus reuteri subsp. reuteri (strain JCM 1112) (Lactobacillus reuteri).